Consider the following 247-residue polypeptide: Protein GrpE (247 aa).

2 disordered regions span residues 1-68 (MKKN…KNDD) and 226-247 (PAEK…KNEN). 3 stretches are compositionally biased toward basic and acidic residues: residues 7–35 (KHAD…KDEQ), 43–54 (TSKENPQEDKAE), and 228–247 (EKQD…KNEN).

Belongs to the GrpE family. In terms of assembly, homodimer.

The protein resides in the cytoplasm. Functionally, participates actively in the response to hyperosmotic and heat shock by preventing the aggregation of stress-denatured proteins, in association with DnaK and GrpE. It is the nucleotide exchange factor for DnaK and may function as a thermosensor. Unfolded proteins bind initially to DnaJ; upon interaction with the DnaJ-bound protein, DnaK hydrolyzes its bound ATP, resulting in the formation of a stable complex. GrpE releases ADP from DnaK; ATP binding to DnaK triggers the release of the substrate protein, thus completing the reaction cycle. Several rounds of ATP-dependent interactions between DnaJ, DnaK and GrpE are required for fully efficient folding. This chain is Protein GrpE, found in Treponema denticola (strain ATCC 35405 / DSM 14222 / CIP 103919 / JCM 8153 / KCTC 15104).